The sequence spans 634 residues: Threonine--tRNA ligase (634 aa).

Residues 1-61 (MINITLPDGS…DHDASLRIIT (61 aa)) form the TGS domain. The catalytic stretch occupies residues 243 to 534 (DHRRIGKAQD…LIEHHAGAFP (292 aa)). The Zn(2+) site is built by Cys-334, His-385, and His-511.

It belongs to the class-II aminoacyl-tRNA synthetase family. In terms of assembly, homodimer. The cofactor is Zn(2+).

The protein resides in the cytoplasm. It carries out the reaction tRNA(Thr) + L-threonine + ATP = L-threonyl-tRNA(Thr) + AMP + diphosphate + H(+). Functionally, catalyzes the attachment of threonine to tRNA(Thr) in a two-step reaction: L-threonine is first activated by ATP to form Thr-AMP and then transferred to the acceptor end of tRNA(Thr). Also edits incorrectly charged L-seryl-tRNA(Thr). This chain is Threonine--tRNA ligase, found in Xanthomonas oryzae pv. oryzae (strain MAFF 311018).